The sequence spans 89 residues: Small ribosomal subunit protein uS17 (89 aa).

The protein belongs to the universal ribosomal protein uS17 family. As to quaternary structure, part of the 30S ribosomal subunit.

One of the primary rRNA binding proteins, it binds specifically to the 5'-end of 16S ribosomal RNA. This chain is Small ribosomal subunit protein uS17, found in Aromatoleum aromaticum (strain DSM 19018 / LMG 30748 / EbN1) (Azoarcus sp. (strain EbN1)).